The sequence spans 1117 residues: Rhoptry apical surface protein 3 (1117 aa).

The span at 1–12 (MENRPRQQTSGH) shows a compositional bias: polar residues. Disordered regions lie at residues 1–27 (MENR…SRPG), 47–243 (NHER…SHFT), 258–301 (DSER…NKGI), 325–398 (SDFK…SLST), 415–442 (WNHA…FLAA), 490–572 (AEAV…ESEL), 600–619 (RPLL…ELRS), and 654–736 (QDGT…RLQG). 3 stretches are compositionally biased toward basic and acidic residues: residues 83-100 (DSNH…DSQK), 197-209 (TPLR…RHVS), and 275-300 (MKPK…DNKG). Low complexity-rich tracts occupy residues 418–442 (ASPG…FLAA) and 490–508 (AEAV…GDSS). Residues 510–520 (ESDHSGRERSR) are compositionally biased toward basic and acidic residues. Positions 530 to 540 (NEITTMRSQRS) are enriched in polar residues. Basic and acidic residues predominate over residues 546–555 (FSREPERESD). The span at 557 to 569 (GEMTPTGETSGSE) shows a compositional bias: polar residues. Residues 724-734 (DADRKQEEKRL) show a composition bias toward basic and acidic residues. The BSD domain occupies 752–788 (MLSVDRRLRKLHSDTAVRRMGETEFWKLYFYQVFLLM). Over residues 829–838 (QTSGFTESDT) the composition is skewed to polar residues. Disordered stretches follow at residues 829-848 (QTSG…YGFA), 858-891 (IIPP…APEQ), 909-964 (RSPS…GDSP), 1031-1066 (SSSQ…PSHL), and 1095-1117 (GTCG…GARA). Residues 839-848 (SSPSPSYGFA) are compositionally biased toward low complexity. A compositionally biased stretch (low complexity) spans 909–931 (RSPSLSSSSSGTTSVSARGTGSS). The span at 1031–1044 (SSSQVNGRVSTSRG) shows a compositional bias: polar residues. Composition is skewed to basic and acidic residues over residues 1046–1062 (MGED…RLEG) and 1108–1117 (KGKEVQGARA).

In terms of assembly, interacts with RASP2.

Its subcellular location is the cytoplasmic vesicle. The protein resides in the secretory vesicle. It is found in the rhoptry membrane. This is Rhoptry apical surface protein 3 from Toxoplasma gondii (strain ATCC 50853 / GT1).